Consider the following 120-residue polypeptide: UPF0715 membrane protein YwlA (120 aa).

The next 4 helical transmembrane spans lie at 3-23, 26-46, 63-83, and 95-115; these read YNYT…VIYI, FIIA…LIFA, LYLL…FGML, and AFYL…SVLL.

The protein belongs to the UPF0715 family.

It is found in the cell membrane. The chain is UPF0715 membrane protein YwlA (ywlA) from Bacillus subtilis (strain 168).